Here is a 564-residue protein sequence, read N- to C-terminus: Large neutral amino acids transporter small subunit 3 (564 aa).

The chain crosses the membrane as a helical span at residues 20 to 40 (VVENLFFSAVLLGWASLLIML). N-linked (GlcNAc...) asparagine glycans are attached at residues asparagine 54 and asparagine 57. Transmembrane regions (helical) follow at residues 78 to 98 (LGFT…GILM), 105 to 124 (PLRL…MALA), 131 to 151 (LSPL…CLTF), 165 to 185 (STFM…FPGI), and 191 to 211 (AGVP…LIFL). Phosphoserine is present on residues serine 262 and serine 267. 2 helical membrane passes run 303–323 (IFLW…FYMG) and 357–377 (SIFG…GYIM). N-linked (GlcNAc...) asparagine glycosylation is present at asparagine 396. Residue serine 398 is modified to Phosphoserine. The next 4 helical transmembrane spans lie at 424–444 (AINA…ACLI), 451–471 (LLAF…CGGL), 490–510 (LISA…VGPL), and 515–535 (FWVN…PSYL). The N-linked (GlcNAc...) asparagine glycan is linked to asparagine 558.

It belongs to the SLC43A transporter (TC 2.A.1.44) family. As to expression, expressed in the kidney cortex as well as liver, pancreas, and skeletal muscle. In kidney expressed in the glomerular tuft (at protein level). Expressed in liver, skeletal muscle and pancreas (at protein level).

The protein localises to the cell membrane. It localises to the apical cell membrane. It is found in the endoplasmic reticulum membrane. The enzyme catalyses D-leucine(in) = D-leucine(out). The catalysed reaction is L-leucine(in) = L-leucine(out). It catalyses the reaction L-isoleucine(in) = L-isoleucine(out). It carries out the reaction L-methionine(in) = L-methionine(out). The enzyme catalyses L-phenylalanine(in) = L-phenylalanine(out). The catalysed reaction is L-valine(in) = L-valine(out). Uniport that mediates the transport of neutral amino acids such as L-leucine, L-isoleucine, L-valine, and L-phenylalanine. The transport activity is sodium ions-independent, electroneutral and mediated by a facilitated diffusion. The chain is Large neutral amino acids transporter small subunit 3 from Mus musculus (Mouse).